Consider the following 116-residue polypeptide: Large ribosomal subunit protein bL20c (116 aa).

This sequence belongs to the bacterial ribosomal protein bL20 family.

Its subcellular location is the plastid. It localises to the chloroplast. In terms of biological role, binds directly to 23S ribosomal RNA and is necessary for the in vitro assembly process of the 50S ribosomal subunit. It is not involved in the protein synthesizing functions of that subunit. In Rhodomonas salina (Cryptomonas salina), this protein is Large ribosomal subunit protein bL20c.